The primary structure comprises 400 residues: Serine/threonine transporter SstT (400 aa).

Helical transmembrane passes span 14-34 (IIIAIILGIGVALLFPTVTPY), 48-68 (SVAPILAFVLVLSSIANFQVG), 76-96 (VLLLYVVGMLLAAFSAVIASL), 136-156 (AISEANFIGILAWAIGLGLAM), 177-197 (IIHKVIAFAPVGIFGLVAVTF), 211-231 (LLAVLLGTMLFVALVINPILV), 293-313 (LAGAAVTITVLTLATVHTLGI), and 334-354 (ASGVAGGSLLLIPVACSLFGI).

This sequence belongs to the dicarboxylate/amino acid:cation symporter (DAACS) (TC 2.A.23) family.

The protein localises to the cell inner membrane. The catalysed reaction is L-serine(in) + Na(+)(in) = L-serine(out) + Na(+)(out). It carries out the reaction L-threonine(in) + Na(+)(in) = L-threonine(out) + Na(+)(out). Involved in the import of serine and threonine into the cell, with the concomitant import of sodium (symport system). The sequence is that of Serine/threonine transporter SstT from Acinetobacter baumannii (strain SDF).